Here is an 892-residue protein sequence, read N- to C-terminus: MTDVTVKSLADEIQTPVDRLVQQFADAGIKKSEVDSVTQQEKETLLAHLNREHGSAPNKLTLQRKTRSTLNIPSTGGKSKSVQIEVRKKRTYVNTPEAEQAKAEEQAQREAEEQAQREAEAAAQKIAEEKAKRAAEEQAKREAAEKAKRQAAEKEKVTNQQTDEKTKPAQTDKARREAEAAELKRSVEEETRRKVEEDAKRVAEEARKMAAENEGKWPEPVAEQTESADYHVTTSQHARAAEDENDAKVEGDRRSRTRGGKATKQKKGNKLSESKADREEARAVGRKGKRKPSTLQQSFNKPVVAVNRDVVIGETVTVAELANKMAVKGSQVIKAMMKLGAMATINQVIDQETAQLVAEEMGHKVILRRENELEEALMSDRDTGAEAAAEHRAPVVTIMGHVDHGKTSLLDYIRSTKVASGEAGGITQHIGAYHVETENGMITFLDTPGHAAFTSMRARGAQATDIVVLVVAADDGVMPQTIEAIQHAKAANVPVVVAVNKIDKPAADPNRVKTELIQHGIISEDFGGDVPFIEVSAKVGTGIDDLLQAILLQAEVMELKAVRTGMASGVVIESFLDKGRGPVATVLVQQGTLNKGDIVLCGFEYGRVRAMRDELGRDITSAGPSIPVEILGLSSVPAAGDEVTVVRDEKKAREVALYRQGKFREVKLARQQKSKLENMFANMTEGEVSELNIVIKSDVQGSCEAICDSLEKLSTDEVKVRIVGSGVGGITETDATLAAASGAIILGFNVRADASARRVVETEGLDLRYYSVIYSLIDEVKQAMSGMLAPEYKQQIIGLAEVRDVFKSPKFGAIAGCMVTEGVIKRNNPIRVLRDNVVIYEGELESLRRFKDDVNEVRNGMECGIGVKNYNDVRTGDVIEVFEIIEIKRTIA.

Positions 51-296 (REHGSAPNKL…KGKRKPSTLQ (246 aa)) are disordered. The span at 68–82 (STLNIPSTGGKSKSV) shows a compositional bias: polar residues. A compositionally biased stretch (basic and acidic residues) spans 99–217 (EQAKAEEQAQ…KMAAENEGKW (119 aa)). Residues 224 to 237 (QTESADYHVTTSQH) are compositionally biased toward polar residues. Residues 239 to 254 (RAAEDENDAKVEGDRR) are compositionally biased toward basic and acidic residues. The segment covering 255–269 (SRTRGGKATKQKKGN) has biased composition (basic residues). Over residues 270 to 283 (KLSESKADREEARA) the composition is skewed to basic and acidic residues. The region spanning 391–560 (HRAPVVTIMG…LLQAEVMELK (170 aa)) is the tr-type G domain. The interval 400–407 (GHVDHGKT) is G1. 400 to 407 (GHVDHGKT) is a GTP binding site. The interval 425–429 (GITQH) is G2. Residues 446–449 (DTPG) form a G3 region. Residues 446 to 450 (DTPGH) and 500 to 503 (NKID) contribute to the GTP site. Residues 500–503 (NKID) are G4. Residues 536-538 (SAK) are G5.

The protein belongs to the TRAFAC class translation factor GTPase superfamily. Classic translation factor GTPase family. IF-2 subfamily.

The protein resides in the cytoplasm. One of the essential components for the initiation of protein synthesis. Protects formylmethionyl-tRNA from spontaneous hydrolysis and promotes its binding to the 30S ribosomal subunits. Also involved in the hydrolysis of GTP during the formation of the 70S ribosomal complex. This Yersinia enterocolitica serotype O:8 / biotype 1B (strain NCTC 13174 / 8081) protein is Translation initiation factor IF-2.